Here is an 89-residue protein sequence, read N- to C-terminus: Large ribosomal subunit protein bL27 (89 aa).

Positions 1 to 20 are disordered; that stretch reads MAHKKAGGSSRNGRDSAGRR.

It belongs to the bacterial ribosomal protein bL27 family.

The protein is Large ribosomal subunit protein bL27 of Jannaschia sp. (strain CCS1).